We begin with the raw amino-acid sequence, 464 residues long: ATP synthase subunit beta (464 aa).

148-155 provides a ligand contact to ATP; the sequence is GGAGVGKT.

The protein belongs to the ATPase alpha/beta chains family. As to quaternary structure, F-type ATPases have 2 components, CF(1) - the catalytic core - and CF(0) - the membrane proton channel. CF(1) has five subunits: alpha(3), beta(3), gamma(1), delta(1), epsilon(1). CF(0) has three main subunits: a(1), b(2) and c(9-12). The alpha and beta chains form an alternating ring which encloses part of the gamma chain. CF(1) is attached to CF(0) by a central stalk formed by the gamma and epsilon chains, while a peripheral stalk is formed by the delta and b chains.

Its subcellular location is the cell inner membrane. It carries out the reaction ATP + H2O + 4 H(+)(in) = ADP + phosphate + 5 H(+)(out). Produces ATP from ADP in the presence of a proton gradient across the membrane. The catalytic sites are hosted primarily by the beta subunits. The polypeptide is ATP synthase subunit beta (Acinetobacter baumannii (strain AB0057)).